Consider the following 422-residue polypeptide: MSFKVPRGTQDILPGQSEKWQKVEAIIRDICRVYRYNEIRTPIFEQTDLFARGVGETTDVVQKEMYTFEDRGGRSLTLRPENTAGVVRAYVEHKMFGAPDQPVKLSYLGPMFRYERQQAGRYRQFVQFGVEAIGSADPAIDAEVIALAMDVYESAGLKDLKLVINSLGDKETRDTHRTALLQHFEPHIHEFCSDCQNRLQKNPLRILDCKVDREHPLMKTAPALTEFLTEESAAYFAQVKSYLDTLGITYVVDPNLVRGLDYYNHTTFEIMSTASGFGAITTLCGGGRYNGLVQEIGGPDVPGIGFALSIERLLLALEAEGVELDTASGLDVYIIAMGEDAKQKAVELTSTFRAKGLATEMDYLDRKMKAQMKSADRLGAKYTIVLGETELEEQAAAVKHMESGEQHKVAFSELVNYLSQQS.

The protein belongs to the class-II aminoacyl-tRNA synthetase family. Homodimer.

The protein localises to the cytoplasm. The enzyme catalyses tRNA(His) + L-histidine + ATP = L-histidyl-tRNA(His) + AMP + diphosphate + H(+). The sequence is that of Histidine--tRNA ligase from Lysinibacillus sphaericus (strain C3-41).